The sequence spans 709 residues: Golgin-84 (709 aa).

Residues 1-664 lie on the Cytoplasmic side of the membrane; the sequence is MASWLKVAED…RATRFLWRHP (664 aa). Disordered regions lie at residues 24-132, 144-195, and 211-265; these read TELS…VVDR, EVEV…NQDA, and EVIH…DQLE. Low complexity predominate over residues 29-43; that stretch reads EQSSPQPSGSSSQEG. Positions 78-89 are enriched in basic and acidic residues; it reads PPRERIKIEKIR. Positions 94–113 are enriched in low complexity; that stretch reads VDSSSVDASASKPDVSSSDV. The segment covering 114–132 has biased composition (basic and acidic residues); sequence KGLDDDGGAEKEEKVVVDR. A compositionally biased stretch (low complexity) spans 162–180; that stretch reads DGAADSGNSEGAAESSAPS. Composition is skewed to basic and acidic residues over residues 211-222 and 248-265; these read EVIHEKNIKEVP and QQEH…DQLE. The stretch at 287-592 forms a coiled coil; sequence RVCAGLSSRL…AALEFQLEKS (306 aa). A helical; Signal-anchor for type II membrane protein transmembrane segment spans residues 665-684; the sequence is VARVSLLFYLVFVHLFLMYL. Topologically, residues 685–707 are lumenal; it reads MHRLQDFASREGPTAMGGLANSD.

The protein localises to the golgi apparatus membrane. May be involved in maintaining Golgi structure and in intra-Golgi transport. The sequence is that of Golgin-84 from Oryza sativa subsp. japonica (Rice).